Consider the following 282-residue polypeptide: Pantothenate synthetase (282 aa).

30 to 37 (MGNLHDGH) provides a ligand contact to ATP. Catalysis depends on H37, which acts as the Proton donor. Q61 serves as a coordination point for (R)-pantoate. Q61 contacts beta-alanine. 149–152 (GNKD) contacts ATP. Residue Q155 participates in (R)-pantoate binding. ATP contacts are provided by residues A178 and 186–189 (MSSR).

It belongs to the pantothenate synthetase family. Homodimer.

The protein resides in the cytoplasm. The catalysed reaction is (R)-pantoate + beta-alanine + ATP = (R)-pantothenate + AMP + diphosphate + H(+). Its pathway is cofactor biosynthesis; (R)-pantothenate biosynthesis; (R)-pantothenate from (R)-pantoate and beta-alanine: step 1/1. Its function is as follows. Catalyzes the condensation of pantoate with beta-alanine in an ATP-dependent reaction via a pantoyl-adenylate intermediate. This is Pantothenate synthetase from Marinomonas sp. (strain MWYL1).